Reading from the N-terminus, the 220-residue chain is Ribose-5-phosphate isomerase A (220 aa).

Residues 28-31 (TGST), 81-84 (DGAD), and 94-97 (KGGG) contribute to the substrate site. Glutamate 103 serves as the catalytic Proton acceptor. Position 121 (lysine 121) interacts with substrate.

This sequence belongs to the ribose 5-phosphate isomerase family. Homodimer.

It carries out the reaction aldehydo-D-ribose 5-phosphate = D-ribulose 5-phosphate. The protein operates within carbohydrate degradation; pentose phosphate pathway; D-ribose 5-phosphate from D-ribulose 5-phosphate (non-oxidative stage): step 1/1. Catalyzes the reversible conversion of ribose-5-phosphate to ribulose 5-phosphate. The protein is Ribose-5-phosphate isomerase A of Shewanella putrefaciens (strain CN-32 / ATCC BAA-453).